The chain runs to 408 residues: Acetylornithine aminotransferase (408 aa).

Residues 107 to 108 (GT) and phenylalanine 141 each bind pyridoxal 5'-phosphate. Arginine 144 lines the N(2)-acetyl-L-ornithine pocket. 227–230 (DEIQ) contributes to the pyridoxal 5'-phosphate binding site. N6-(pyridoxal phosphate)lysine is present on lysine 256. Position 284 (threonine 284) interacts with N(2)-acetyl-L-ornithine. Residue threonine 285 coordinates pyridoxal 5'-phosphate.

This sequence belongs to the class-III pyridoxal-phosphate-dependent aminotransferase family. ArgD subfamily. As to quaternary structure, homodimer. It depends on pyridoxal 5'-phosphate as a cofactor.

The protein resides in the cytoplasm. The enzyme catalyses N(2)-acetyl-L-ornithine + 2-oxoglutarate = N-acetyl-L-glutamate 5-semialdehyde + L-glutamate. It functions in the pathway amino-acid biosynthesis; L-arginine biosynthesis; N(2)-acetyl-L-ornithine from L-glutamate: step 4/4. This chain is Acetylornithine aminotransferase, found in Xanthomonas axonopodis pv. citri (strain 306).